The sequence spans 501 residues: Monocarboxylate transporter 1 (501 aa).

Residues 1–22 lie on the Cytoplasmic side of the membrane; sequence MPPAVGGPVGYTPPDGGWGWAV. Residues 23 to 44 traverse the membrane as a helical segment; it reads VIGAFISIGFSYAFPKSITVFF. A (S)-lactate-binding site is contributed by lysine 38. Topologically, residues 45–55 are extracellular; sequence KEIEGIFNATT. The helical transmembrane segment at 56–80 threads the bilayer; that stretch reads SEVSWISSIMLAVMYGGGPISSVLV. Topologically, residues 81 to 84 are cytoplasmic; it reads NKYG. Residues 85–105 form a helical membrane-spanning segment; the sequence is SRPVMIVGGILSGSGLIAASF. At 106-109 the chain is on the extracellular side; it reads CNTV. A helical transmembrane segment spans residues 110-132; that stretch reads QELYFSVGVIGGLGLAFNLNPAL. At 133 to 146 the chain is on the cytoplasmic side; the sequence is TMIGKYFYKRRPLA. A helical membrane pass occupies residues 147–169; the sequence is NGLAMAGSPVFLSTLAPLNQAFF. The Extracellular portion of the chain corresponds to 170-174; it reads MIYGW. Residues 175–194 traverse the membrane as a helical segment; sequence RGSFLILGGLLLNCCVAGAL. At 195 to 261 the chain is on the cytoplasmic side; sequence MRPIGPKPTT…FLDLSLFKHR (67 aa). The disordered stretch occupies residues 201–236; that stretch reads KPTTAEKEKSKGSLQEAGKYETKKGASDANTDLIGG. Phosphoserine is present on residues serine 210, serine 213, and serine 227. Threonine 231 bears the Phosphothreonine mark. The helical transmembrane segment at 262–288 threads the bilayer; that stretch reads GFLLYLSGNVLMFFGLFTPLVFLSNYG. At 289–295 the chain is on the extracellular side; it reads KSKHYSS. Residues 296–317 traverse the membrane as a helical segment; that stretch reads EKAAFLLSILAFVDMVARPSMG. Aspartate 309 serves as a coordination point for H(+). Arginine 313 contributes to the (S)-lactate binding site. Over 318–328 the chain is Cytoplasmic; the sequence is LVANTKWVRPR. The helical transmembrane segment at 329–349 threads the bilayer; the sequence is VQYFFAASIIANGLCHLAAPL. Topologically, residues 350–353 are extracellular; the sequence is SSTY. Residues 354-375 traverse the membrane as a helical segment; the sequence is IELCIYAGFFGFAFGWLSSVLF. Residues 376-389 are Cytoplasmic-facing; that stretch reads ETLMDLVGPQRFSS. Residues 390–410 form a helical membrane-spanning segment; the sequence is AVGLVTIVECCPVLLGPPVLG. Topologically, residues 411–421 are extracellular; the sequence is RLNDIYGDYKY. The chain crosses the membrane as a helical span at residues 422-443; the sequence is TYWACGIILIVAGIYLFIGMGI. At 444-501 the chain is on the cytoplasmic side; the sequence is NYRLLEKEQKAEKQQKKESKDEETNVDVAEKPKEVIDAAESPEHKATEEDPKEAESPV. The segment at 454–501 is disordered; sequence AEKQQKKESKDEETNVDVAEKPKEVIDAAESPEHKATEEDPKEAESPV. Position 462 is a phosphoserine (serine 462). The residue at position 467 (threonine 467) is a Phosphothreonine. A phosphoserine mark is found at serine 484 and serine 499.

It belongs to the major facilitator superfamily. Monocarboxylate porter (TC 2.A.1.13) family. As to quaternary structure, interacts with BSG; interaction mediates SLC16A1 targeting to the plasma membrane. Interacts with EMB; interaction mediates SLC16A1 targeting to the plasma membrane.

It localises to the cell membrane. It is found in the basolateral cell membrane. The protein localises to the apical cell membrane. The enzyme catalyses (S)-lactate(in) + H(+)(in) = (S)-lactate(out) + H(+)(out). It carries out the reaction acetate(out) + H(+)(out) = acetate(in) + H(+)(in). It catalyses the reaction acetoacetate(out) + H(+)(out) = acetoacetate(in) + H(+)(in). The catalysed reaction is pyruvate(out) + H(+)(out) = pyruvate(in) + H(+)(in). The enzyme catalyses (R)-3-hydroxybutanoate(out) + H(+)(out) = (R)-3-hydroxybutanoate(in) + H(+)(in). It carries out the reaction 3-methyl-2-oxobutanoate(out) + H(+)(out) = 3-methyl-2-oxobutanoate(in) + H(+)(in). It catalyses the reaction 4-methyl-2-oxopentanoate(out) + H(+)(out) = 4-methyl-2-oxopentanoate(in) + H(+)(in). The catalysed reaction is succinate(in) + 2 H(+)(in) = succinate(out) + 2 H(+)(out). Functionally, bidirectional proton-coupled monocarboxylate transporter. Catalyzes the rapid transport across the plasma membrane of many monocarboxylates such as lactate, pyruvate, acetate and the ketone bodies acetoacetate and beta-hydroxybutyrate, and thus contributes to the maintenance of intracellular pH. The transport direction is determined by the proton motive force and the concentration gradient of the substrate monocarboxylate. MCT1 is a major lactate exporter. Plays a role in cellular responses to a high-fat diet by modulating the cellular levels of lactate and pyruvate that contribute to the regulation of central metabolic pathways and insulin secretion, with concomitant effects on plasma insulin levels and blood glucose homeostasis. Facilitates the protonated monocarboxylate form of succinate export, that its transient protonation upon muscle cell acidification in exercising muscle and ischemic heart. Functions via alternate outward- and inward-open conformation states. Protonation and deprotonation of 309-Asp is essential for the conformational transition. The protein is Monocarboxylate transporter 1 (SLC16A1) of Bos taurus (Bovine).